The following is a 139-amino-acid chain: uncharacterized protein (139 aa).

The next 2 helical transmembrane spans lie at 35–55 (AYFK…AAAA) and 119–139 (CCLF…VFCV).

Its subcellular location is the membrane. This is an uncharacterized protein from Saccharomyces cerevisiae (strain ATCC 204508 / S288c) (Baker's yeast).